Consider the following 379-residue polypeptide: Chaperone protein DnaJ (379 aa).

The region spanning 5–69 (EFYDRLGVSK…QKRAAYDQYG (65 aa)) is the J domain. Residues 135 to 217 (GAEKEVSYNR…CHGTGHEKKT (83 aa)) form a CR-type zinc finger. Cys148, Cys151, Cys165, Cys168, Cys191, Cys194, Cys205, and Cys208 together coordinate Zn(2+). CXXCXGXG motif repeat units follow at residues 148–155 (CHTCSGSG), 165–172 (CQKCHGSG), 191–198 (CDVCQGSG), and 205–212 (CPTCHGTG).

This sequence belongs to the DnaJ family. In terms of assembly, homodimer. Requires Zn(2+) as cofactor.

It localises to the cytoplasm. Participates actively in the response to hyperosmotic and heat shock by preventing the aggregation of stress-denatured proteins and by disaggregating proteins, also in an autonomous, DnaK-independent fashion. Unfolded proteins bind initially to DnaJ; upon interaction with the DnaJ-bound protein, DnaK hydrolyzes its bound ATP, resulting in the formation of a stable complex. GrpE releases ADP from DnaK; ATP binding to DnaK triggers the release of the substrate protein, thus completing the reaction cycle. Several rounds of ATP-dependent interactions between DnaJ, DnaK and GrpE are required for fully efficient folding. Also involved, together with DnaK and GrpE, in the DNA replication of plasmids through activation of initiation proteins. The chain is Chaperone protein DnaJ from Streptococcus agalactiae serotype V (strain ATCC BAA-611 / 2603 V/R).